The sequence spans 336 residues: Aspartate--ammonia ligase (336 aa).

The protein belongs to the class-II aminoacyl-tRNA synthetase family. AsnA subfamily.

The protein localises to the cytoplasm. It catalyses the reaction L-aspartate + NH4(+) + ATP = L-asparagine + AMP + diphosphate + H(+). Its pathway is amino-acid biosynthesis; L-asparagine biosynthesis; L-asparagine from L-aspartate (ammonia route): step 1/1. The protein is Aspartate--ammonia ligase of Clostridium perfringens (strain ATCC 13124 / DSM 756 / JCM 1290 / NCIMB 6125 / NCTC 8237 / Type A).